A 229-amino-acid chain; its full sequence is Orotate phosphoribosyltransferase (229 aa).

5-phospho-alpha-D-ribose 1-diphosphate is bound by residues R107, K108, K111, H113, and 133–141; that span reads EDLTTAGGS. T137 is an orotate binding site.

This sequence belongs to the purine/pyrimidine phosphoribosyltransferase family. PyrE subfamily. In terms of assembly, homodimer. Mg(2+) is required as a cofactor.

The enzyme catalyses orotidine 5'-phosphate + diphosphate = orotate + 5-phospho-alpha-D-ribose 1-diphosphate. The protein operates within pyrimidine metabolism; UMP biosynthesis via de novo pathway; UMP from orotate: step 1/2. Its function is as follows. Catalyzes the transfer of a ribosyl phosphate group from 5-phosphoribose 1-diphosphate to orotate, leading to the formation of orotidine monophosphate (OMP). In Rhizobium johnstonii (strain DSM 114642 / LMG 32736 / 3841) (Rhizobium leguminosarum bv. viciae), this protein is Orotate phosphoribosyltransferase.